A 134-amino-acid chain; its full sequence is Small ribosomal subunit protein uS12 (134 aa).

Asp89 is modified (3-methylthioaspartic acid). Positions 101-134 (TLDASGVNGRNQSRSKYGTKRPKPGQAAAGGKKK) are disordered. A compositionally biased stretch (low complexity) spans 125 to 134 (GQAAAGGKKK).

It belongs to the universal ribosomal protein uS12 family. As to quaternary structure, part of the 30S ribosomal subunit. Contacts proteins S8 and S17. May interact with IF1 in the 30S initiation complex.

Its function is as follows. With S4 and S5 plays an important role in translational accuracy. Interacts with and stabilizes bases of the 16S rRNA that are involved in tRNA selection in the A site and with the mRNA backbone. Located at the interface of the 30S and 50S subunits, it traverses the body of the 30S subunit contacting proteins on the other side and probably holding the rRNA structure together. The combined cluster of proteins S8, S12 and S17 appears to hold together the shoulder and platform of the 30S subunit. This chain is Small ribosomal subunit protein uS12, found in Gemmatimonas aurantiaca (strain DSM 14586 / JCM 11422 / NBRC 100505 / T-27).